The sequence spans 105 residues: Replication restart protein PriB (105 aa).

In terms of domain architecture, SSB spans 1-102 (MTANRLTLSG…LHAEQIELID (102 aa)).

It belongs to the PriB family. As to quaternary structure, homodimer. Interacts with PriA and DnaT. Component of the replication restart primosome. Primosome assembly occurs via a 'hand-off' mechanism. PriA binds to replication forks, subsequently PriB then DnaT bind; DnaT then displaces ssDNA to generate the helicase loading substrate.

Its function is as follows. Involved in the restart of stalled replication forks, which reloads the replicative helicase on sites other than the origin of replication; the PriA-PriB pathway is the major replication restart pathway. During primosome assembly it facilitates complex formation between PriA and DnaT on DNA; stabilizes PriA on DNA. Stimulates the DNA unwinding activity of PriA helicase. The sequence is that of Replication restart protein PriB from Erwinia tasmaniensis (strain DSM 17950 / CFBP 7177 / CIP 109463 / NCPPB 4357 / Et1/99).